The chain runs to 555 residues: MASCYNPWRLFPGMSTAVPAGPVTAPAHSRTCKSSKVFSALPHRRGLLFLGTRRARIKCVKDDSLHFDPSKIEPPPYSSYFDSTSGQLEPASGARASIPGKEYWPEGTAARVRAARAPAPVGESAGMPSFGTKPGSRRRGYKEQVTSASGTEGAQTDDRKDGDEPDVAIIGSGDDALEEIKDSVDEYVIYETPEEEELSEYDMDKMMGRPHPFIDPAKAMSLGEPKTSEELWWHWRRKSQEEEMWSRWQRRRPDVDTVFAKAMAETGQIKIFGDHPSRTEAALAKTRRHLYKEERLEAEQRRLEEIGPIAYYSEWVEAYKNKDTSREAIQKHFEETGEDENVQLIKMFQHQTAGEYRIMMGTDVRIQRDPLAMRMREDQIKQIWGGDPVYPTINYVQDPDEVIDYRGPEFHEPTPEVVPYLMEHGIMITKEELYARLNEEREDVNQDITYIPEAKDPMATAIDIGEHSYNEDSDDEDEDVDKAAAQPQSLEDEEDDRDDVAEVEEKVNQNWSALKSTGQAEKPKEKSKKDEMTLKEAIDDSENLTDFLMDFEETE.

The N-terminal 58 residues, 1-58 (MASCYNPWRLFPGMSTAVPAGPVTAPAHSRTCKSSKVFSALPHRRGLLFLGTRRARIK), are a transit peptide targeting the chloroplast. Disordered stretches follow at residues 80–100 (YFDSTSGQLEPASGARASIPG), 115–167 (ARAP…EPDV), and 468–541 (SYNE…IDDS). A compositionally biased stretch (polar residues) spans 144-154 (QVTSASGTEGA). Acidic residues-rich tracts occupy residues 471-480 (EDSDDEDEDV) and 490-502 (LEDEEDDRDDVAE). Residues 508-519 (NQNWSALKSTGQ) show a composition bias toward polar residues. Residues 521 to 538 (EKPKEKSKKDEMTLKEAI) are compositionally biased toward basic and acidic residues.

As to quaternary structure, component of the plastid-encoded plastid RNA polymerase (PEP) complex.

It localises to the plastid. Its subcellular location is the chloroplast stroma. The protein localises to the nucleus. Functionally, required for the activity of the plastid-encoded RNA polymerase (PEP) and full expression of genes transcribed by PEP. Required for the proper build-up and formation of the PEP-complex. Binds single-stranded (ss) DNA and RNA, but not double-stranded (ds) DNA. The protein is Protein PLASTID TRANSCRIPTIONALLY ACTIVE 12, chloroplastic of Zea mays (Maize).